The sequence spans 70 residues: Large ribosomal subunit protein bL31 (70 aa).

Zn(2+) contacts are provided by C16, C18, C37, and C40.

The protein belongs to the bacterial ribosomal protein bL31 family. Type A subfamily. As to quaternary structure, part of the 50S ribosomal subunit. Zn(2+) is required as a cofactor.

Functionally, binds the 23S rRNA. The sequence is that of Large ribosomal subunit protein bL31 from Haemophilus ducreyi (strain 35000HP / ATCC 700724).